Consider the following 57-residue polypeptide: UPF0391 membrane protein BRADO5617 (57 aa).

Helical transmembrane passes span 1 to 21 and 30 to 50; these read MLGW…LGFG and IAKI…VVGL.

This sequence belongs to the UPF0391 family.

It localises to the cell membrane. This Bradyrhizobium sp. (strain ORS 278) protein is UPF0391 membrane protein BRADO5617.